We begin with the raw amino-acid sequence, 316 residues long: Ornithine carbamoyltransferase (316 aa).

Carbamoyl phosphate is bound by residues 57–60, Gln-84, Arg-108, and 135–138; these read STRT and HPCQ. L-ornithine-binding positions include Asn-166, Asp-230, and 234–235; that span reads SM. Carbamoyl phosphate contacts are provided by residues 269–270 and Arg-297; that span reads CL.

It belongs to the aspartate/ornithine carbamoyltransferase superfamily. OTCase family.

The protein resides in the cytoplasm. The enzyme catalyses carbamoyl phosphate + L-ornithine = L-citrulline + phosphate + H(+). It functions in the pathway amino-acid degradation; L-arginine degradation via ADI pathway; carbamoyl phosphate from L-arginine: step 2/2. Functionally, reversibly catalyzes the transfer of the carbamoyl group from carbamoyl phosphate (CP) to the N(epsilon) atom of ornithine (ORN) to produce L-citrulline. The protein is Ornithine carbamoyltransferase of Bacillus cereus (strain 03BB102).